We begin with the raw amino-acid sequence, 187 residues long: Calcium and integrin-binding family member 2 (187 aa).

3 consecutive EF-hand domains span residues 66 to 101, 103 to 138, and 144 to 179; these read KENP…LSEM, PREL…LTKE, and EVNL…APDF. Residues aspartate 157, aspartate 159, aspartate 161, lysine 163, and aspartate 168 each contribute to the Ca(2+) site.

As to quaternary structure, monomer. Homodimer. As to expression, enriched in central and striolar hair cells.

Its subcellular location is the cytoplasm. The protein localises to the cell projection. The protein resides in the stereocilium. It is found in the photoreceptor inner segment. It localises to the cilium. Its subcellular location is the photoreceptor outer segment. The protein localises to the cell membrane. The protein resides in the sarcolemma. Functionally, calcium- and integrin-binding protein. Plays a role in intracellular calcium homeostasis. Critical for proper photoreceptor cell maintenance and function. Essential for development, maintenance and function of mechanosensory hair cells. The chain is Calcium and integrin-binding family member 2 from Danio rerio (Zebrafish).